The chain runs to 238 residues: Ribonuclease PH (238 aa).

Phosphate contacts are provided by residues R86 and 124 to 126; that span reads GTR.

The protein belongs to the RNase PH family. As to quaternary structure, homohexameric ring arranged as a trimer of dimers.

It catalyses the reaction tRNA(n+1) + phosphate = tRNA(n) + a ribonucleoside 5'-diphosphate. Functionally, phosphorolytic 3'-5' exoribonuclease that plays an important role in tRNA 3'-end maturation. Removes nucleotide residues following the 3'-CCA terminus of tRNAs; can also add nucleotides to the ends of RNA molecules by using nucleoside diphosphates as substrates, but this may not be physiologically important. Probably plays a role in initiation of 16S rRNA degradation (leading to ribosome degradation) during starvation. The protein is Ribonuclease PH of Cupriavidus metallidurans (strain ATCC 43123 / DSM 2839 / NBRC 102507 / CH34) (Ralstonia metallidurans).